Consider the following 422-residue polypeptide: Gamma-glutamyl phosphate reductase (422 aa).

It belongs to the gamma-glutamyl phosphate reductase family.

It localises to the cytoplasm. The enzyme catalyses L-glutamate 5-semialdehyde + phosphate + NADP(+) = L-glutamyl 5-phosphate + NADPH + H(+). The protein operates within amino-acid biosynthesis; L-proline biosynthesis; L-glutamate 5-semialdehyde from L-glutamate: step 2/2. Functionally, catalyzes the NADPH-dependent reduction of L-glutamate 5-phosphate into L-glutamate 5-semialdehyde and phosphate. The product spontaneously undergoes cyclization to form 1-pyrroline-5-carboxylate. This chain is Gamma-glutamyl phosphate reductase, found in Chlorobium phaeovibrioides (strain DSM 265 / 1930) (Prosthecochloris vibrioformis (strain DSM 265)).